Reading from the N-terminus, the 780-residue chain is Myosin heavy chain kinase C (780 aa).

The Alpha-type protein kinase domain occupies 40-243; that stretch reads IGDDLKPKWT…VCDFLKLKPI (204 aa). The segment at 310–495 is disordered; sequence RIRAQQQQKS…MEQTPDRSEF (186 aa). The segment covering 337–350 has biased composition (low complexity); that stretch reads QQSPSSPTSKPVPQ. The segment covering 353–376 has biased composition (polar residues); the sequence is KTPSQSNVVNKSPVSPPKENSNVK. A compositionally biased stretch (low complexity) spans 380 to 436; that stretch reads DNINNNNSSISSNNDNSNNNNNNNDNINNSSNSSSVNSNSSSVSSSSSSSSSSSSSS. The segment covering 437–450 has biased composition (polar residues); it reads TTNAAPISIQVSRN. The segment covering 458–488 has biased composition (low complexity); that stretch reads IQPSSAAASASSTSSSNVPTPESTSTSSMEQ. WD repeat units follow at residues 507-546, 549-589, 591-628, 631-668, 671-708, and 748-780; these read DTVR…HVTN, AHGK…TIKE, KESN…CVKT, GHTR…ILTN, GHEG…CVNT, and NTRS…WDKM.

Belongs to the protein kinase superfamily. Alpha-type protein kinase family. ALPK subfamily. Interacts with myosin II heavy chain (mhcA). Post-translationally, autophosphorylated in vitro.

It is found in the cytoplasm. It localises to the cell cortex. Its subcellular location is the membrane. The protein localises to the cleavage furrow. The enzyme catalyses L-threonyl-[myosin heavy-chain] + ATP = O-phospho-L-threonyl-[myosin heavy-chain] + ADP + H(+). Phosphorylates threonine at 'Thr-1823', 'Thr-1833' and 'Thr-2029' in the C-terminal tail region of myosin II heavy chain (mhcA). This phosphorylation is critical in actin-activated ATPase activity of the myosin and regulating the assembly and disassembly of myosin II filament. In vitro, catalytic domain phosphorylates mhcA, myelin basic protein, myosin regulatory light chain, casein and caldesmon. Drives the disassembly of myosin II filaments for efficient cytokinesis and recycling of myosin II that occurs during late cytokinesis. Can be activated in vitro by autophosphorylation. In Dictyostelium discoideum (Social amoeba), this protein is Myosin heavy chain kinase C (mhkC).